Here is a 259-residue protein sequence, read N- to C-terminus: uncharacterized protein (259 aa).

The protein belongs to the BtpA family.

This is an uncharacterized protein from Pyrococcus abyssi (strain GE5 / Orsay).